We begin with the raw amino-acid sequence, 230 residues long: Cytochrome c oxidase subunit 2 (230 aa).

At 1–14 the chain is on the mitochondrial intermembrane side; the sequence is MAHPTQLGFKDAAM. The chain crosses the membrane as a helical span at residues 15-45; that stretch reads PVMEELLHFHDHALMIVLLISTLVLYIITAM. At 46-59 the chain is on the mitochondrial matrix side; that stretch reads VSTKLTNKYILDSQ. Residues 60-87 form a helical membrane-spanning segment; it reads EIEIVWTILPAVILVLIALPSLRILYLM. Residues 88-230 lie on the Mitochondrial intermembrane side of the membrane; sequence DEINDPHLTI…NWSSLMLEDA (143 aa). Residues His161, Cys196, Glu198, Cys200, His204, and Met207 each coordinate Cu cation. Glu198 contacts Mg(2+).

This sequence belongs to the cytochrome c oxidase subunit 2 family. Component of the cytochrome c oxidase (complex IV, CIV), a multisubunit enzyme composed of 14 subunits. The complex is composed of a catalytic core of 3 subunits MT-CO1, MT-CO2 and MT-CO3, encoded in the mitochondrial DNA, and 11 supernumerary subunits COX4I, COX5A, COX5B, COX6A, COX6B, COX6C, COX7A, COX7B, COX7C, COX8 and NDUFA4, which are encoded in the nuclear genome. The complex exists as a monomer or a dimer and forms supercomplexes (SCs) in the inner mitochondrial membrane with NADH-ubiquinone oxidoreductase (complex I, CI) and ubiquinol-cytochrome c oxidoreductase (cytochrome b-c1 complex, complex III, CIII), resulting in different assemblies (supercomplex SCI(1)III(2)IV(1) and megacomplex MCI(2)III(2)IV(2)). Found in a complex with TMEM177, COA6, COX18, COX20, SCO1 and SCO2. Interacts with TMEM177 in a COX20-dependent manner. Interacts with COX20. Interacts with COX16. Cu cation serves as cofactor.

The protein resides in the mitochondrion inner membrane. The catalysed reaction is 4 Fe(II)-[cytochrome c] + O2 + 8 H(+)(in) = 4 Fe(III)-[cytochrome c] + 2 H2O + 4 H(+)(out). Functionally, component of the cytochrome c oxidase, the last enzyme in the mitochondrial electron transport chain which drives oxidative phosphorylation. The respiratory chain contains 3 multisubunit complexes succinate dehydrogenase (complex II, CII), ubiquinol-cytochrome c oxidoreductase (cytochrome b-c1 complex, complex III, CIII) and cytochrome c oxidase (complex IV, CIV), that cooperate to transfer electrons derived from NADH and succinate to molecular oxygen, creating an electrochemical gradient over the inner membrane that drives transmembrane transport and the ATP synthase. Cytochrome c oxidase is the component of the respiratory chain that catalyzes the reduction of oxygen to water. Electrons originating from reduced cytochrome c in the intermembrane space (IMS) are transferred via the dinuclear copper A center (CU(A)) of subunit 2 and heme A of subunit 1 to the active site in subunit 1, a binuclear center (BNC) formed by heme A3 and copper B (CU(B)). The BNC reduces molecular oxygen to 2 water molecules using 4 electrons from cytochrome c in the IMS and 4 protons from the mitochondrial matrix. This is Cytochrome c oxidase subunit 2 (mt-co2) from Cyprinus carpio (Common carp).